A 256-amino-acid chain; its full sequence is Acetyl-coenzyme A carboxylase carboxyl transferase subunit alpha (256 aa).

The region spanning 1–236 (MTKITRIVRE…KQELLVELEQ (236 aa)) is the CoA carboxyltransferase C-terminal domain.

This sequence belongs to the AccA family. As to quaternary structure, acetyl-CoA carboxylase is a heterohexamer composed of biotin carboxyl carrier protein (AccB), biotin carboxylase (AccC) and two subunits each of ACCase subunit alpha (AccA) and ACCase subunit beta (AccD).

It localises to the cytoplasm. It carries out the reaction N(6)-carboxybiotinyl-L-lysyl-[protein] + acetyl-CoA = N(6)-biotinyl-L-lysyl-[protein] + malonyl-CoA. It functions in the pathway lipid metabolism; malonyl-CoA biosynthesis; malonyl-CoA from acetyl-CoA: step 1/1. Component of the acetyl coenzyme A carboxylase (ACC) complex. First, biotin carboxylase catalyzes the carboxylation of biotin on its carrier protein (BCCP) and then the CO(2) group is transferred by the carboxyltransferase to acetyl-CoA to form malonyl-CoA. This chain is Acetyl-coenzyme A carboxylase carboxyl transferase subunit alpha, found in Streptococcus gordonii (strain Challis / ATCC 35105 / BCRC 15272 / CH1 / DL1 / V288).